Consider the following 686-residue polypeptide: Protein arginine N-methyltransferase 7 (686 aa).

2 SAM-dependent MTase PRMT-type domains span residues 5-352 (SDDY…FSWW) and 357-686 (DLSL…FKFD).

Belongs to the class I-like SAM-binding methyltransferase superfamily. Protein arginine N-methyltransferase family. PRMT7 subfamily.

Functionally, essential arginine methyltransferase that can both catalyze the formation of omega-N monomethylarginine (MMA) and symmetrical dimethylarginine (sDMA). Specifically mediates the symmetrical dimethylation of arginine residues in the small nuclear ribonucleoproteins SmD1 and SmD3. The sequence is that of Protein arginine N-methyltransferase 7 (Art7) from Aedes aegypti (Yellowfever mosquito).